The sequence spans 110 residues: Ribonuclease P protein component 1 (110 aa).

It belongs to the eukaryotic/archaeal RNase P protein component 1 family. In terms of assembly, consists of a catalytic RNA component and at least 4-5 protein subunits.

The protein localises to the cytoplasm. The enzyme catalyses Endonucleolytic cleavage of RNA, removing 5'-extranucleotides from tRNA precursor.. Its function is as follows. Part of ribonuclease P, a protein complex that generates mature tRNA molecules by cleaving their 5'-ends. The polypeptide is Ribonuclease P protein component 1 (Methanosarcina acetivorans (strain ATCC 35395 / DSM 2834 / JCM 12185 / C2A)).